The primary structure comprises 80 residues: Cell division activator CedA (80 aa).

It belongs to the CedA family.

Its function is as follows. Activates the cell division inhibited by chromosomal DNA over-replication. The sequence is that of Cell division activator CedA from Salmonella choleraesuis (strain SC-B67).